The sequence spans 303 residues: Cathepsin B-like CP1 (303 aa).

Positions 1 to 19 (MALSLLLAVVCAKPLVSRA) are cleaved as a signal peptide. An N-linked (GlcNAc...) asparagine glycan is attached at asparagine 41. 3 disulfide bridges follow: cysteine 92–cysteine 119, cysteine 102–cysteine 145, and cysteine 138–cysteine 181. Cysteine 105 is a catalytic residue. Residues histidine 249 and asparagine 270 contribute to the active site.

The protein belongs to the peptidase C1 family.

Its subcellular location is the vacuole. Its function is as follows. Thiol protease which is required for parasite excystation and invasion of the proximal small intestine of the human host. The sequence is that of Cathepsin B-like CP1 (CP1) from Giardia intestinalis (Giardia lamblia).